The primary structure comprises 417 residues: Cyanophycinase (417 aa).

Residues 1-23 (MIRSFIRSSALLLALLPVTGYSA) form the signal peptide. Catalysis depends on charge relay system residues Ser169, Asp188, and His222.

Belongs to the peptidase S51 family.

It is found in the secreted. The enzyme catalyses [L-4-(L-arginin-2-N-yl)aspartate](n) + H2O = [L-4-(L-arginin-2-N-yl)aspartate](n-1) + L-4-(L-arginin-2-N-yl)aspartate. With respect to regulation, inhibited by serine protease inhibitors. Inhibited by N-Bromo-succinimide. In terms of biological role, exopeptidase that catalyzes the hydrolytic cleavage of multi-L-arginyl-poly-L-aspartic acid (cyanophycin; a water-insoluble reserve polymer) into aspartate-arginine dipeptides. The polypeptide is Cyanophycinase (cphE) (Pseudomonas anguilliseptica).